Here is a 132-residue protein sequence, read N- to C-terminus: CLAVATA3/ESR (CLE)-related protein TDIF (132 aa).

The first 26 residues, 1–26 (MDIDLLWSFGGWFFILFPETINYCMA), serve as a signal peptide directing secretion. Residues 42–62 (SCSSLFFVALLIITILITMLQ) form a helical membrane-spanning segment. The segment covering 68-77 (EVTSLPTHQP) has biased composition (polar residues). A disordered region spans residues 68-132 (EVTSLPTHQP…PSGPNPISNR (65 aa)). The span at 87-96 (STSSTATTTT) shows a compositional bias: low complexity. The segment covering 101–111 (KRTHHQSHPKP) has biased composition (basic residues). Pro123 and Pro126 each carry hydroxyproline. A glycan (O-linked (Ara...) hydroxyproline) is linked at Pro126.

This sequence belongs to the CLV3/ESR signal peptide family. In terms of assembly, interacts specifically with the leucine-rich repeat receptor-like protein kinase TDR. The TDIFp peptide contains two hydroxprolines, but hydroxylation had no direct effect on TDIFp activity. Post-translationally, the O-glycosylation (arabinosylation) of the hydroxyproline Pro-126 enhances binding affinity of the TDIFp peptide for its receptor.

The protein localises to the secreted. The protein resides in the extracellular space. Its subcellular location is the cell membrane. In terms of biological role, extracellular signal peptide that regulates cell fate. Represses tracheary element differentiation but promotes the formation of procambial cells adjacent to phloem cells in the veins. The sequence is that of CLAVATA3/ESR (CLE)-related protein TDIF from Zinnia elegans (Garden zinnia).